We begin with the raw amino-acid sequence, 497 residues long: L-arabinose isomerase (497 aa).

4 residues coordinate Mn(2+): E306, E331, H348, and H447.

It belongs to the arabinose isomerase family. Mn(2+) is required as a cofactor.

The catalysed reaction is beta-L-arabinopyranose = L-ribulose. It functions in the pathway carbohydrate degradation; L-arabinose degradation via L-ribulose; D-xylulose 5-phosphate from L-arabinose (bacterial route): step 1/3. Its function is as follows. Catalyzes the conversion of L-arabinose to L-ribulose. This chain is L-arabinose isomerase, found in Halalkalibacterium halodurans (strain ATCC BAA-125 / DSM 18197 / FERM 7344 / JCM 9153 / C-125) (Bacillus halodurans).